Consider the following 194-residue polypeptide: Prefoldin subunit 3 (194 aa).

The protein belongs to the prefoldin subunit alpha family. In terms of assembly, heterohexamer of two PFD-alpha type and four PFD-beta type subunits. Interacts with itself. Interacts with Vhl and betaTub56D/tubulin beta-1 chain. Interacts with tubulin alpha-beta heterodimers by itself or in complex with Vhl. Does not interact with microtubules (MTs). Expressed in larval central nervous system (CNS) and pupal testis (at protein level).

It localises to the cytoplasm. Functionally, binds specifically to cytosolic chaperonin (c-CPN) and transfers target proteins to it. Binds to nascent polypeptide chain and promotes folding in an environment in which there are many competing pathways for nonnative proteins. Required for tubulin stability and spindle and centrosome formation in cooperation with Vhl. This Drosophila melanogaster (Fruit fly) protein is Prefoldin subunit 3 (mgr).